Consider the following 85-residue polypeptide: Large ribosomal subunit protein bL27 (85 aa).

Positions 1–20 (MATKKAGGSTRNGRDSEAKR) are disordered.

The protein belongs to the bacterial ribosomal protein bL27 family.

This Haemophilus influenzae (strain ATCC 51907 / DSM 11121 / KW20 / Rd) protein is Large ribosomal subunit protein bL27.